An 819-amino-acid chain; its full sequence is NEDD4-binding protein 1 (819 aa).

Over residues 1-13 (MASGSVQSSSGNG) the composition is skewed to polar residues. A disordered region spans residues 1-20 (MASGSVQSSSGNGRRQAAVV). In terms of domain architecture, KH-like spans 80-164 (KQAVRRAKEY…VQQFIALFKD (85 aa)). Basic and acidic residues predominate over residues 226–241 (DDKAECKVNQKDEVSR). 2 disordered regions span residues 226-247 (DDKA…AGTP) and 666-736 (KLDD…MAPR). Positions 517 to 669 (LKHIIIDGSN…LGRYGPKLDD (153 aa)) constitute an RNase NYN domain. A compositionally biased stretch (polar residues) spans 673–689 (KQPNNRTVHSSFPSSNE). The interval 772-819 (RSPSETMQLKEALLKIFPEADQRHKINEILTAHPFMRDLNALSAMVLD) is coCUN.

This sequence belongs to the N4BP1 family.

The protein resides in the cytoplasm. Its subcellular location is the cytosol. It is found in the nucleus. The protein localises to the nucleolus. It localises to the PML body. Functionally, potent suppressor of cytokine production that acts as a regulator of innate immune signaling and inflammation. Acts as a key negative regulator of select cytokine and chemokine responses elicited by TRIF-independent Toll-like receptors (TLRs), thereby limiting inflammatory cytokine responses to minor insults. Has ribonuclease activity. This Xenopus tropicalis (Western clawed frog) protein is NEDD4-binding protein 1.